A 506-amino-acid chain; its full sequence is UPF0522 protein A (506 aa).

The first 18 residues, 1-18 (MIKSLLLLISIIIGIVIS), serve as a signal peptide directing secretion. Residues Asn-145, Asn-155, Asn-330, Asn-366, Asn-418, and Asn-427 are each glycosylated (N-linked (GlcNAc...) asparagine).

It belongs to the UPF0522 family.

The protein localises to the secreted. The polypeptide is UPF0522 protein A (Dictyostelium discoideum (Social amoeba)).